The chain runs to 517 residues: Crotonobetaine/carnitine--CoA ligase (517 aa).

This sequence belongs to the ATP-dependent AMP-binding enzyme family.

It carries out the reaction 4-(trimethylamino)butanoate + ATP + CoA = 4-(trimethylamino)butanoyl-CoA + AMP + diphosphate. The catalysed reaction is crotonobetaine + ATP + CoA = crotonobetainyl-CoA + AMP + diphosphate. The enzyme catalyses (R)-carnitine + ATP + CoA = (R)-carnitinyl-CoA + AMP + diphosphate. The protein operates within amine and polyamine metabolism; carnitine metabolism. Its function is as follows. Catalyzes the transfer of CoA to carnitine, generating the initial carnitinyl-CoA needed for the CaiB reaction cycle. Also has activity toward crotonobetaine and gamma-butyrobetaine. This Escherichia coli O157:H7 protein is Crotonobetaine/carnitine--CoA ligase.